The following is a 164-amino-acid chain: FMN reductase (NADH) RutF (164 aa).

The protein belongs to the non-flavoprotein flavin reductase family. RutF subfamily.

It carries out the reaction FMNH2 + NAD(+) = FMN + NADH + 2 H(+). In terms of biological role, catalyzes the reduction of FMN to FMNH2 which is used to reduce pyrimidine by RutA via the Rut pathway. This is FMN reductase (NADH) RutF from Klebsiella variicola (strain At-22).